Here is a 281-residue protein sequence, read N- to C-terminus: NADPH-dependent 7-cyano-7-deazaguanine reductase (281 aa).

Position 87–89 (87–89) interacts with substrate; sequence IES. 89-90 serves as a coordination point for NADPH; the sequence is SK. The active-site Thioimide intermediate is C188. The Proton donor role is filled by D195. 227–228 is a substrate binding site; that stretch reads HE. An NADPH-binding site is contributed by 256–257; that stretch reads RG. The disordered stretch occupies residues 261-281; sequence INPYRSTEQAKPDHNHRMARQ. The span at 268-281 shows a compositional bias: basic and acidic residues; sequence EQAKPDHNHRMARQ.

Belongs to the GTP cyclohydrolase I family. QueF type 2 subfamily. As to quaternary structure, homodimer.

It localises to the cytoplasm. The catalysed reaction is 7-aminomethyl-7-carbaguanine + 2 NADP(+) = 7-cyano-7-deazaguanine + 2 NADPH + 3 H(+). The protein operates within tRNA modification; tRNA-queuosine biosynthesis. In terms of biological role, catalyzes the NADPH-dependent reduction of 7-cyano-7-deazaguanine (preQ0) to 7-aminomethyl-7-deazaguanine (preQ1). This Vibrio vulnificus (strain YJ016) protein is NADPH-dependent 7-cyano-7-deazaguanine reductase.